Here is a 404-residue protein sequence, read N- to C-terminus: Sorting nexin-5 (404 aa).

The residue at position 2 (Ala2) is an N-acetylalanine. Residues 25–172 (LNVDPSLQID…HVFLEYDQDL (148 aa)) form the PX domain. A 1,2-diacyl-sn-glycero-3-phospho-(1D-myo-inositol-4,5-bisphosphate)-binding positions include 40-46 (SERDKVK), 99-105 (FDGPREK), and 113-116 (EGSM). The interval 169-261 (DQDLSVRRKN…HSLALEEPTV (93 aa)) is interaction with DOCK1. Residues 183–200 (FGGFFKSVVKSADEVLFT) form a membrane-binding amphipathic helix region. Position 193 is a phosphoserine (Ser193). The BAR domain occupies 202-404 (VKEVDDFFEQ…QSCIDLFKNN (203 aa)). Lys275 is subject to N6-acetyllysine.

It belongs to the sorting nexin family. Forms heterodimers with BAR domain-containing sorting nexins SNX1 and SNX2; does not homodimerize. The heterodimers are proposed to self-assemble into helical arrays on the membrane to stabilize and expand local membrane curvature underlying endosomal tubule formation. Thought to be a component of the originally described retromer complex (also called SNX-BAR retromer) which is a pentamer containing the heterotrimeric retromer cargo-selective complex (CSC), also described as vacuolar protein sorting subcomplex (VPS), and a heterodimeric membrane-deforming subcomplex formed between SNX1 or SNX2 and SNX5 or SNX6 (also called SNX-BAR subcomplex); the respective CSC and SNX-BAR subcomplexes associate with low affinity. Interacts with SNX1, SNX2, VPS26A, VPS29, VPS35, DCTN1, DOCK1, MIB1, PIP5K1C isoform 3. Interacts with HGS; increased by PIP5K1C isoform 3 kinase activity and by PtdIns(3P) and/or PtdIns(3,4)P2. As to quaternary structure, (Microbial infection) Interacts with human cytomegalovirus proteins UL35 and UL35A; these interactions inhibit the ability of USP7 to form nuclear bodies.

It localises to the endosome. Its subcellular location is the early endosome. The protein resides in the early endosome membrane. It is found in the cell membrane. The protein localises to the cytoplasmic vesicle membrane. It localises to the cytoplasm. Its subcellular location is the cell projection. The protein resides in the phagocytic cup. It is found in the ruffle. Its function is as follows. Involved in several stages of intracellular trafficking. Interacts with membranes containing phosphatidylinositol 3-phosphate (PtdIns(3P)) or phosphatidylinositol 3,4-bisphosphate (PtdIns(3,4)P2). Acts in part as component of the retromer membrane-deforming SNX-BAR subcomplex. The SNX-BAR retromer mediates retrograde transport of cargo proteins from endosomes to the trans-Golgi network (TGN) and is involved in endosome-to-plasma membrane transport for cargo protein recycling. The SNX-BAR subcomplex functions to deform the donor membrane into a tubular profile called endosome-to-TGN transport carrier (ETC). Does not have in vitro vesicle-to-membrane remodeling activity. Involved in retrograde transport of lysosomal enzyme receptor IGF2R. May function as link between endosomal transport vesicles and dynactin. Plays a role in the internalization of EGFR after EGF stimulation. Involved in EGFR endosomal sorting and degradation; the function involves PIP5K1C isoform 3 and is retromer-independent. Together with PIP5K1C isoform 3 facilitates HGS interaction with ubiquitinated EGFR, which initiates EGFR sorting to intraluminal vesicles (ILVs) of the multivesicular body for subsequent lysosomal degradation. Involved in E-cadherin sorting and degradation; inhibits PIP5K1C isoform 3-mediated E-cadherin degradation. Plays a role in macropinocytosis. The protein is Sorting nexin-5 (SNX5) of Homo sapiens (Human).